The primary structure comprises 171 residues: S-ribosylhomocysteine lyase (171 aa).

Fe cation contacts are provided by His54, His58, and Cys128.

Belongs to the LuxS family. As to quaternary structure, homodimer. The cofactor is Fe cation.

It carries out the reaction S-(5-deoxy-D-ribos-5-yl)-L-homocysteine = (S)-4,5-dihydroxypentane-2,3-dione + L-homocysteine. In terms of biological role, involved in the synthesis of autoinducer 2 (AI-2) which is secreted by bacteria and is used to communicate both the cell density and the metabolic potential of the environment. The regulation of gene expression in response to changes in cell density is called quorum sensing. Catalyzes the transformation of S-ribosylhomocysteine (RHC) to homocysteine (HC) and 4,5-dihydroxy-2,3-pentadione (DPD). The chain is S-ribosylhomocysteine lyase from Escherichia coli O81 (strain ED1a).